The primary structure comprises 396 residues: Ribosomal RNA large subunit methyltransferase I (396 aa).

The region spanning 2–81 is the PUA domain; that stretch reads SVRLVLAKGR…ESIDIAFFSR (80 aa).

This sequence belongs to the methyltransferase superfamily. RlmI family.

It localises to the cytoplasm. The catalysed reaction is cytidine(1962) in 23S rRNA + S-adenosyl-L-methionine = 5-methylcytidine(1962) in 23S rRNA + S-adenosyl-L-homocysteine + H(+). Specifically methylates the cytosine at position 1962 (m5C1962) of 23S rRNA. The polypeptide is Ribosomal RNA large subunit methyltransferase I (Shigella boydii serotype 18 (strain CDC 3083-94 / BS512)).